A 491-amino-acid polypeptide reads, in one-letter code: Glutamyl-tRNA(Gln) amidotransferase subunit A (491 aa).

Catalysis depends on charge relay system residues Lys-76 and Ser-154. Ser-178 functions as the Acyl-ester intermediate in the catalytic mechanism.

It belongs to the amidase family. GatA subfamily. In terms of assembly, heterotrimer of A, B and C subunits.

The enzyme catalyses L-glutamyl-tRNA(Gln) + L-glutamine + ATP + H2O = L-glutaminyl-tRNA(Gln) + L-glutamate + ADP + phosphate + H(+). Allows the formation of correctly charged Gln-tRNA(Gln) through the transamidation of misacylated Glu-tRNA(Gln) in organisms which lack glutaminyl-tRNA synthetase. The reaction takes place in the presence of glutamine and ATP through an activated gamma-phospho-Glu-tRNA(Gln). The polypeptide is Glutamyl-tRNA(Gln) amidotransferase subunit A (Cereibacter sphaeroides (strain KD131 / KCTC 12085) (Rhodobacter sphaeroides)).